Here is a 192-residue protein sequence, read N- to C-terminus: Ras-like GTP-binding protein Rho1 (192 aa).

12–19 (GDGACGKT) contributes to the GTP binding site. Positions 34–42 (YVPTVFENY) match the Effector region motif. GTP contacts are provided by residues 59–63 (DTAGQ) and 117–120 (NKKD). Cys-189 is subject to Cysteine methyl ester. Cys-189 carries the S-geranylgeranyl cysteine lipid modification. Positions 190-192 (LLL) are cleaved as a propeptide — removed in mature form.

It belongs to the small GTPase superfamily. Rho family. As to quaternary structure, interacts with capu. Interacts (via REM repeats) with Pkn (via N-terminus). Interacts (via N-terminus) with wash (via N-terminus). May interact with dia/diaphanous (via CBD/FH3 domain). Expressed in hemocytes (at protein level).

Its subcellular location is the cell membrane. The protein resides in the cytoplasm. It localises to the cytoskeleton. The protein localises to the apical cell membrane. It is found in the lateral cell membrane. Has a role in regulating actin cytoskeletal organization: required during early development for proper execution of morphogenetic movements of individual cells and groups of cells important for the formation of the embryonic body plan. Plays a role in regulating dorsal closure during embryogenesis. During axis elongation, required for Rho-kinase Rok planar polarity and adherens junction localization as well as for generating a planar polarized distribution of the actin-binding protein Shrm. During embryogenesis, acts upstream of wash to regulate the developmental migration of tail hemocytes anteriorly along the ventral midline. May have a role in eye development. Involved in targeted recruitment of dia/diaphanous to apical membranes of polarized epithelial cells. This is Ras-like GTP-binding protein Rho1 from Drosophila melanogaster (Fruit fly).